Consider the following 447-residue polypeptide: ATP-dependent protease ATPase subunit HslU (447 aa).

ATP is bound by residues Ile-18, 60-65, Asp-259, Glu-325, and Arg-397; that span reads GVGKTE.

The protein belongs to the ClpX chaperone family. HslU subfamily. As to quaternary structure, a double ring-shaped homohexamer of HslV is capped on each side by a ring-shaped HslU homohexamer. The assembly of the HslU/HslV complex is dependent on binding of ATP.

It is found in the cytoplasm. In terms of biological role, ATPase subunit of a proteasome-like degradation complex; this subunit has chaperone activity. The binding of ATP and its subsequent hydrolysis by HslU are essential for unfolding of protein substrates subsequently hydrolyzed by HslV. HslU recognizes the N-terminal part of its protein substrates and unfolds these before they are guided to HslV for hydrolysis. This is ATP-dependent protease ATPase subunit HslU from Burkholderia cenocepacia (strain HI2424).